The primary structure comprises 344 residues: Beta-hexosaminidase (344 aa).

Substrate contacts are provided by residues Asp-60, Arg-68, Arg-132, and Lys-162–His-163. The Proton donor/acceptor role is filled by His-175. The active-site Nucleophile is Asp-247.

This sequence belongs to the glycosyl hydrolase 3 family. NagZ subfamily.

The protein resides in the cytoplasm. It catalyses the reaction Hydrolysis of terminal non-reducing N-acetyl-D-hexosamine residues in N-acetyl-beta-D-hexosaminides.. It participates in cell wall biogenesis; peptidoglycan recycling. Its function is as follows. Plays a role in peptidoglycan recycling by cleaving the terminal beta-1,4-linked N-acetylglucosamine (GlcNAc) from peptide-linked peptidoglycan fragments, giving rise to free GlcNAc, anhydro-N-acetylmuramic acid and anhydro-N-acetylmuramic acid-linked peptides. In Haemophilus ducreyi (strain 35000HP / ATCC 700724), this protein is Beta-hexosaminidase.